Reading from the N-terminus, the 123-residue chain is MARISGIDLPKEKRVEIGLTYIYGIGLPTSQEILKATGVNPDTRVKDLSEEEVNAIRDYVNKNVKVEGDLRREIKLNIKRLVEIGSYRGIRHRRNLPVRGQKTKTNARTRKGPKRAIGGKKKK.

The disordered stretch occupies residues 93 to 123 (RRNLPVRGQKTKTNARTRKGPKRAIGGKKKK).

Belongs to the universal ribosomal protein uS13 family. In terms of assembly, part of the 30S ribosomal subunit. Forms a loose heterodimer with protein S19. Forms two bridges to the 50S subunit in the 70S ribosome.

Functionally, located at the top of the head of the 30S subunit, it contacts several helices of the 16S rRNA. In the 70S ribosome it contacts the 23S rRNA (bridge B1a) and protein L5 of the 50S subunit (bridge B1b), connecting the 2 subunits; these bridges are implicated in subunit movement. Contacts the tRNAs in the A and P-sites. The protein is Small ribosomal subunit protein uS13 of Clostridium botulinum (strain Kyoto / Type A2).